We begin with the raw amino-acid sequence, 67 residues long: Large ribosomal subunit protein bL31 (67 aa).

Cys-16, Cys-18, Cys-36, and Cys-39 together coordinate Zn(2+).

This sequence belongs to the bacterial ribosomal protein bL31 family. Type A subfamily. As to quaternary structure, part of the 50S ribosomal subunit. It depends on Zn(2+) as a cofactor.

In terms of biological role, binds the 23S rRNA. The sequence is that of Large ribosomal subunit protein bL31 from Treponema pallidum (strain Nichols).